The primary structure comprises 233 residues: Ribonuclease HII (233 aa).

Positions 26 to 215 constitute an RNase H type-2 domain; sequence QLVAGIDEVG…VRASEGEGLE (190 aa). A divalent metal cation contacts are provided by Asp32, Glu33, and Asp124. Residues 211-233 form a disordered region; that stretch reads GEGLETAAGRQSSEGKKGRRPRG.

It belongs to the RNase HII family. Requires Mn(2+) as cofactor. Mg(2+) serves as cofactor.

It is found in the cytoplasm. It catalyses the reaction Endonucleolytic cleavage to 5'-phosphomonoester.. Its function is as follows. Endonuclease that specifically degrades the RNA of RNA-DNA hybrids. This chain is Ribonuclease HII, found in Syntrophobacter fumaroxidans (strain DSM 10017 / MPOB).